An 845-amino-acid polypeptide reads, in one-letter code: Nuclear pore complex protein Nup107 (845 aa).

2 disordered regions span residues 1 to 26 (MADSPFPRSSRSGLLRTTLNSSMPPQ) and 677 to 702 (QNRPKKPQTSHAASSQDNFTERMASE). Polar residues-rich tracts occupy residues 7–26 (PRSSRSGLLRTTLNSSMPPQ) and 685–694 (TSHAASSQDN).

The protein belongs to the nucleoporin Nup84/Nup107 family. Part of the nuclear pore complex (NPC). As to expression, expressed in spermatocytes (at protein level).

Its subcellular location is the nucleus. It localises to the nuclear pore complex. It is found in the nucleus envelope. The protein resides in the nucleus membrane. The protein localises to the cytoplasm. Its subcellular location is the cytoskeleton. It localises to the spindle. It is found in the chromosome. The protein resides in the nucleus matrix. In terms of biological role, plays a role in nuclear pore complex (NPC) assembly and maintenance. Required for nuclear import of Mad. Mediates the association between the nuclear pore complex and a subset of active chromatin regions adjacent to lamin-associated domains. Plays a role in double strand break repair by relocalizing the heterochromatic double strand breaks (DSBs) to the nuclear periphery as part of the homologous recombination (HR) repair process. Regulates cytokinesis during spermatocyte meiosis by maintaining type-B lamin Lam localization to the spindle envelope. Regulates female gonad development and oogenesis. The protein is Nuclear pore complex protein Nup107 of Drosophila melanogaster (Fruit fly).